A 314-amino-acid chain; its full sequence is Ribonuclease Z (314 aa).

Zn(2+) contacts are provided by His60, His62, Asp64, His65, His140, Asp209, and His269. Asp64 serves as the catalytic Proton acceptor.

This sequence belongs to the RNase Z family. In terms of assembly, homodimer. Requires Zn(2+) as cofactor.

It catalyses the reaction Endonucleolytic cleavage of RNA, removing extra 3' nucleotides from tRNA precursor, generating 3' termini of tRNAs. A 3'-hydroxy group is left at the tRNA terminus and a 5'-phosphoryl group is left at the trailer molecule.. Functionally, zinc phosphodiesterase, which displays some tRNA 3'-processing endonuclease activity. Probably involved in tRNA maturation, by removing a 3'-trailer from precursor tRNA. This Methanococcus maripaludis (strain C5 / ATCC BAA-1333) protein is Ribonuclease Z.